Reading from the N-terminus, the 312-residue chain is tRNA uridine(34) hydroxylase (312 aa).

In terms of domain architecture, Rhodanese spans 123–217 (SDPEVLLIDT…YLEEVPQEQS (95 aa)). Cysteine 177 serves as the catalytic Cysteine persulfide intermediate. Over residues 282 to 293 (ARERQKQIELAR) the composition is skewed to basic and acidic residues. The disordered stretch occupies residues 282-312 (ARERQKQIELARQRNQPHPLGRDPRQSTLEN).

Belongs to the TrhO family.

It carries out the reaction uridine(34) in tRNA + AH2 + O2 = 5-hydroxyuridine(34) in tRNA + A + H2O. Functionally, catalyzes oxygen-dependent 5-hydroxyuridine (ho5U) modification at position 34 in tRNAs. This chain is tRNA uridine(34) hydroxylase, found in Pseudomonas aeruginosa (strain UCBPP-PA14).